The chain runs to 248 residues: MAVGKDKRISKGKKGGKKKIVDPFSKKDWYDIKAPPRSRRARSGRRCHRTAGTKIASDGLNFRVFEVSLADLQNDEDQAFRKIKLRAEDVQGKNVLTNFWGMDFTTDKLRSLVRKWQSLIQAHVDVKTTDNYQIRIFCIAFTKKRPNHTRNFYAQSSQIAIRRKMREIMVKEAQTCDLKELVAKFIPEVIGKEIDEWRSQGIYPLQSTFIRKVKILKAPKFDLMKLMEVHGDYNEEVGAKIREASSRG.

Positions 1–21 (MAVGKDKRISKGKKGGKKKIV) are disordered.

The protein belongs to the eukaryotic ribosomal protein eS1 family. Component of the small ribosomal subunit. Mature ribosomes consist of a small (40S) and a large (60S) subunit. The 40S subunit contains about 33 different proteins and 1 molecule of RNA (18S). The 60S subunit contains about 49 different proteins and 3 molecules of RNA (25S, 5.8S and 5S).

Its subcellular location is the cytoplasm. The polypeptide is Small ribosomal subunit protein eS1 (Syntrichia ruralis (Great hairy screw-moss)).